Consider the following 354-residue polypeptide: Green-sensitive opsin-3 (354 aa).

Residues 1–39 (MSGLNGFEGDNFYIPMSNRTGLVRDPFVYEQYYLAEPWQ) lie on the Extracellular side of the membrane. N-linked (GlcNAc...) asparagine glycosylation is present at Asn18. Residues 40–64 (FKLLACYMFFLICLGLPINGFTLFV) form a helical membrane-spanning segment. Residues 65 to 76 (TAQHKKLQQPLN) lie on the Cytoplasmic side of the membrane. Residues 77-102 (FILVNLAVAGMIMVCFGFTITISSAV) traverse the membrane as a helical segment. Residues 103 to 116 (NGYFYFGPTACAIE) lie on the Extracellular side of the membrane. An intrachain disulfide couples Cys113 to Cys190. The helical transmembrane segment at 117-136 (GFMATLGGEVALWSLVVLAI) threads the bilayer. Residues 137–155 (ERYIVVCKPMGSFKFSASH) are Cytoplasmic-facing. A helical membrane pass occupies residues 156-179 (ALGGIGFTWFMAMTCAAPPLVGWS). Residues 180–205 (RYIPEGLQCSCGPDYYTLNPKYNNES) are Extracellular-facing. Asn203 carries an N-linked (GlcNAc...) asparagine glycan. The helical transmembrane segment at 206–233 (YVIYMFVVHFIVPVTVIFFTYGRLVCTV) threads the bilayer. The Cytoplasmic segment spans residues 234–255 (KSAAAAQQDSASTQKAEKEVTR). A helical transmembrane segment spans residues 256 to 279 (MVILMVVGFLVAWTPYATVAAWIF). The Extracellular portion of the chain corresponds to 280–287 (FNKGAAFT). The helical transmembrane segment at 288–312 (AQFMAVPAFFSKSSALFNPIIYVLL) threads the bilayer. Lys299 carries the N6-(retinylidene)lysine modification. Topologically, residues 313–354 (NKQFRNCMLTTLFCGKNPLGDEESSTVSTKTEVSTVSSVSPA) are cytoplasmic.

This sequence belongs to the G-protein coupled receptor 1 family. Opsin subfamily. As to expression, the color pigments are found in the cone photoreceptor cells.

Its subcellular location is the membrane. Its function is as follows. Visual pigments are the light-absorbing molecules that mediate vision. They consist of an apoprotein, opsin, covalently linked to cis-retinal. The chain is Green-sensitive opsin-3 (RH11) from Psalidodon fasciatus (Banded astyanax).